We begin with the raw amino-acid sequence, 325 residues long: Histone-lysine N-methyltransferase ATXR4 (325 aa).

A signal peptide spans 1–30 (MSRLALNRYSRCFSRLKTLTTPLFFSSSAA). Residues 42–295 (PPIRVGLTES…EGEELRICYI (254 aa)) enclose the SET domain.

This sequence belongs to the class V-like SAM-binding methyltransferase superfamily. Histone-lysine methyltransferase family. TRX/MLL subfamily.

The protein resides in the nucleus. The catalysed reaction is L-lysyl-[histone] + S-adenosyl-L-methionine = N(6)-methyl-L-lysyl-[histone] + S-adenosyl-L-homocysteine + H(+). Functionally, histone methyltransferase. This is Histone-lysine N-methyltransferase ATXR4 (ATXR4) from Arabidopsis thaliana (Mouse-ear cress).